Here is a 262-residue protein sequence, read N- to C-terminus: Ribosomal RNA small subunit methyltransferase A (262 aa).

Positions 16, 18, 43, 64, 89, and 109 each coordinate S-adenosyl-L-methionine.

It belongs to the class I-like SAM-binding methyltransferase superfamily. rRNA adenine N(6)-methyltransferase family. RsmA subfamily.

The protein localises to the cytoplasm. It catalyses the reaction adenosine(1518)/adenosine(1519) in 16S rRNA + 4 S-adenosyl-L-methionine = N(6)-dimethyladenosine(1518)/N(6)-dimethyladenosine(1519) in 16S rRNA + 4 S-adenosyl-L-homocysteine + 4 H(+). Functionally, specifically dimethylates two adjacent adenosines (A1518 and A1519) in the loop of a conserved hairpin near the 3'-end of 16S rRNA in the 30S particle. May play a critical role in biogenesis of 30S subunits. This chain is Ribosomal RNA small subunit methyltransferase A, found in Xanthomonas campestris pv. campestris (strain 8004).